Here is a 195-residue protein sequence, read N- to C-terminus: Protein lin-28 homolog A (195 aa).

The 74-residue stretch at 33-106 folds into the CSD domain; sequence QGSGVCKWFN…GLESTRVTGP (74 aa). Residues 98–126 are disordered; it reads LESTRVTGPGGAPCIGSERRPKVKGQQKR. The tract at residues 107 to 130 is flexible linker; sequence GGAPCIGSERRPKVKGQQKRRQKG. 2 CCHC-type zinc fingers span residues 131-148 and 153-170; these read DRCYNCGGLDHHAKECKL and KKCHFCQSPNHMVAQCPA. C133, C136, H141, C146, C155, C158, H163, and C168 together coordinate Zn(2+). The segment at 175–195 is disordered; it reads AANLEEQPISEEQELIPETME. Residues 182-195 show a composition bias toward acidic residues; sequence PISEEQELIPETME.

The protein belongs to the lin-28 family. Monomer.

The protein resides in the cytoplasm. Its subcellular location is the rough endoplasmic reticulum. It is found in the P-body. The protein localises to the stress granule. It localises to the nucleus. The protein resides in the nucleolus. Functionally, RNA-binding protein that inhibits processing of pre-let-7 miRNAs and regulates translation of mRNAs that control developmental timing, pluripotency and metabolism. Seems to recognize a common structural G-quartet (G4) feature in its miRNA and mRNA targets. 'Translational enhancer' that drives specific mRNAs to polysomes and increases the efficiency of protein synthesis. Its association with the translational machinery and target mRNAs results in an increased number of initiation events per molecule of mRNA and, indirectly, in mRNA stabilization. Suppressor of microRNA (miRNA) biogenesis, including that of let-7. Binds specific target miRNA precursors (pre-miRNAs), recognizing an 5'-GGAG-3' motif found in their terminal loop, and recruits uridylyltransferase. This results in the terminal uridylation of target pre-miRNAs. Uridylated pre-miRNAs fail to be processed by Dicer and undergo degradation. Localized to the periendoplasmic reticulum area, binds to a large number of spliced mRNAs and inhibits the translation of mRNAs destined for the ER, reducing the synthesis of transmembrane proteins, ER or Golgi lumen proteins, and secretory proteins. Binds to and enhances the translation of mRNAs for several metabolic enzymes, increasing glycolysis and oxidative phosphorylation. Which, with the let-7 repression may enhance tissue repair in adult tissue. The polypeptide is Protein lin-28 homolog A (lin28a) (Xenopus tropicalis (Western clawed frog)).